A 248-amino-acid polypeptide reads, in one-letter code: MVRLKKSFGQHLLVSEGVLKKIAEELNIEEGNTVVEVGGGTGNLTKVLLQHPLKKLYVIELDREMVENLKSIGDERLEVINEDASKFPFCSLGKELKVVGNLPYNVASLIIENTVYNKDCVPLAVFMVQKEVAEKLQGKKDTGWLSVFVRTFYDVNYVMTVPPRFFVPPPKVQSAVIKLVKNEKFPVKDLKNYKKFLTKIFQNRRKVLRKKIPEELLKEAGINPDARVEQLSLEDFFKLYRLIEDSGE.

S-adenosyl-L-methionine is bound by residues H11, L13, G38, E60, D83, and N101.

The protein belongs to the class I-like SAM-binding methyltransferase superfamily. rRNA adenine N(6)-methyltransferase family. RsmA subfamily.

The protein localises to the cytoplasm. The enzyme catalyses adenosine(1518)/adenosine(1519) in 16S rRNA + 4 S-adenosyl-L-methionine = N(6)-dimethyladenosine(1518)/N(6)-dimethyladenosine(1519) in 16S rRNA + 4 S-adenosyl-L-homocysteine + 4 H(+). Functionally, specifically dimethylates two adjacent adenosines (A1518 and A1519) in the loop of a conserved hairpin near the 3'-end of 16S rRNA in the 30S particle. May play a critical role in biogenesis of 30S subunits. The sequence is that of Ribosomal RNA small subunit methyltransferase A from Aquifex aeolicus (strain VF5).